Consider the following 490-residue polypeptide: Pleckstrin homology domain-containing family O member 2 (490 aa).

Positions 18-119 (MVDKAGWIKK…WIKALNEGIN (102 aa)) constitute a PH domain. 2 positions are modified to phosphoserine: Ser164 and Ser167. The segment at 173 to 402 (LDLDVPDSGP…DLLGEGPRHP (230 aa)) is disordered. Over residues 230-243 (APTPVSASSEVSPE) the composition is skewed to low complexity. Thr232 is subject to Phosphothreonine. 3 positions are modified to phosphoserine: Ser235, Ser237, and Ser238. The segment covering 244–257 (SQEDSETPAEEDSG) has biased composition (acidic residues). Residue Ser273 is modified to Phosphoserine. Positions 277–297 (PSPQEAPAAESAEPSQAPCSE) are enriched in low complexity. A phosphothreonine mark is found at Thr298 and Thr311. Ser390 and Ser468 each carry phosphoserine. A coiled-coil region spans residues 439-481 (SAETLLSQAVEQLRQATQVLQEMRDLGELSQEAPGLREKRKEL).

The sequence is that of Pleckstrin homology domain-containing family O member 2 (PLEKHO2) from Homo sapiens (Human).